Reading from the N-terminus, the 863-residue chain is Eukaryotic translation initiation factor 3 subunit C (863 aa).

A disordered region spans residues 1 to 92 (MSRFFRGGDD…VKSAKDKRFD (92 aa)). Residues 16-53 (SSDEEELYSTSEEEEEEDQDQEESSEEEDEEESSDEDE) are compositionally biased toward acidic residues. The segment covering 79-92 (GATKVKSAKDKRFD) has biased composition (basic and acidic residues). The region spanning 604–778 (FHMHINLELL…KTVIFRKGVE (175 aa)) is the PCI domain. Residues 808–863 (TQGSANAFSRKDGRQGGQRGGGQRSGRGGARAGGNAQRQAGGTQFTGGALGAAVRG) are disordered. The span at 822–839 (QGGQRGGGQRSGRGGARA) shows a compositional bias: gly residues. A compositionally biased stretch (low complexity) spans 840-850 (GGNAQRQAGGT).

The protein belongs to the eIF-3 subunit C family. Component of the eukaryotic translation initiation factor 3 (eIF-3) complex.

It localises to the cytoplasm. Its function is as follows. Component of the eukaryotic translation initiation factor 3 (eIF-3) complex, which is involved in protein synthesis of a specialized repertoire of mRNAs and, together with other initiation factors, stimulates binding of mRNA and methionyl-tRNAi to the 40S ribosome. The eIF-3 complex specifically targets and initiates translation of a subset of mRNAs involved in cell proliferation. The sequence is that of Eukaryotic translation initiation factor 3 subunit C from Chaetomium globosum (strain ATCC 6205 / CBS 148.51 / DSM 1962 / NBRC 6347 / NRRL 1970) (Soil fungus).